A 285-amino-acid polypeptide reads, in one-letter code: Golgi to ER traffic protein 2 (285 aa).

The span at 1 to 10 shows a compositional bias: basic and acidic residues; the sequence is MSELTEAEKR. The disordered stretch occupies residues 1-71; that stretch reads MSELTEAEKR…HSATPDIKED (71 aa). Position 2 is an N-acetylserine (serine 2). At 2 to 148 the chain is on the cytoplasmic side; that stretch reads SELTEAEKRR…LDYHDYLLNR (147 aa). Residues 11–20 show a composition bias toward basic residues; that stretch reads RLLRERRQKK. Polar residues predominate over residues 24 to 42; it reads GGASSRLNKITGQASSHLN. Residue serine 45 is modified to Phosphoserine. Residues 49–60 are compositionally biased toward low complexity; that stretch reads APSAAKATPPAS. A helical membrane pass occupies residues 149 to 169; that stretch reads LKAWTILVKWVFFLLPYLYLI. Over 170-196 the chain is Lumenal; that stretch reads TRPNSSVWPAYAFTQSAWFAPLRNPSN. N-linked (GlcNAc...) asparagine glycans are attached at residues asparagine 173 and asparagine 196. The helical transmembrane segment at 197–216 threads the bilayer; it reads FTRIFATFEFLSISIYYQLL. Topologically, residues 217 to 263 are cytoplasmic; it reads KNVEHKSKIKNLQDTNKLVKLVSLVPEGVIPVANLKGKLITLLQYWD. Residues 264-284 form a helical membrane-spanning segment; the sequence is LLSMLITDISFVLIVLGLLTY. A topological domain (lumenal) is located at residue leucine 285.

The protein belongs to the GET2 family. As to quaternary structure, component of the Golgi to ER traffic (GET) complex, which is composed of GET1, GET2 and GET3. Within the complex, GET1 and GET2 form a heterotetramer which is stabilized by phosphatidylinositol binding and which binds to the GET3 homodimer.

The protein resides in the endoplasmic reticulum membrane. Its subcellular location is the golgi apparatus membrane. Its function is as follows. Required for the post-translational delivery of tail-anchored (TA) proteins to the endoplasmic reticulum. Together with GET1, acts as a membrane receptor for soluble GET3, which recognizes and selectively binds the transmembrane domain of TA proteins in the cytosol. The GET complex cooperates with the HDEL receptor ERD2 to mediate the ATP-dependent retrieval of resident ER proteins that contain a C-terminal H-D-E-L retention signal from the Golgi to the ER. Involved in DNA replication and DNA damage response and also in cell wall function. This Saccharomyces cerevisiae (strain YJM789) (Baker's yeast) protein is Golgi to ER traffic protein 2.